Here is a 400-residue protein sequence, read N- to C-terminus: Nicotinate phosphoribosyltransferase (400 aa).

H220 carries the post-translational modification Phosphohistidine; by autocatalysis.

It belongs to the NAPRTase family. Post-translationally, transiently phosphorylated on a His residue during the reaction cycle. Phosphorylation strongly increases the affinity for substrates and increases the rate of nicotinate D-ribonucleotide production. Dephosphorylation regenerates the low-affinity form of the enzyme, leading to product release.

The enzyme catalyses nicotinate + 5-phospho-alpha-D-ribose 1-diphosphate + ATP + H2O = nicotinate beta-D-ribonucleotide + ADP + phosphate + diphosphate. It participates in cofactor biosynthesis; NAD(+) biosynthesis; nicotinate D-ribonucleotide from nicotinate: step 1/1. Functionally, catalyzes the synthesis of beta-nicotinate D-ribonucleotide from nicotinate and 5-phospho-D-ribose 1-phosphate at the expense of ATP. In Salmonella typhimurium (strain LT2 / SGSC1412 / ATCC 700720), this protein is Nicotinate phosphoribosyltransferase.